Reading from the N-terminus, the 258-residue chain is (S)-hydroxynitrile lyase (258 aa).

In terms of domain architecture, AB hydrolase-1 spans 5–242; the sequence is HFVLIHTICH…GGDHKLQLTK (238 aa). 2-hydroxy-2-methylpropanenitrile contacts are provided by Thr11 and Ser80. Thr11, Ser80, and Cys81 together coordinate acetone. Catalysis depends on Ser80, which acts as the Proton donor/acceptor. Residue His236 is the Proton donor/acceptor of the active site.

This sequence belongs to the AB hydrolase superfamily. Hydroxynitrile lyase family. Homotetramer.

The enzyme catalyses a monosubstituted aliphatic (S)-hydroxynitrile = an aldehyde + hydrogen cyanide. It carries out the reaction a disubstituted aliphatic (S)-hydroxynitrile = a ketone + hydrogen cyanide. It catalyses the reaction an aromatic (S)-hydroxynitrile = an aromatic aldehyde + hydrogen cyanide. The catalysed reaction is 2-hydroxy-2-methylpropanenitrile = acetone + hydrogen cyanide. The enzyme catalyses butan-2-one + hydrogen cyanide = 2-hydroxy-2-methylbutanenitrile. It carries out the reaction pentan-2-one + hydrogen cyanide = (2S)-2-hydroxy-2-methylpentanenitrile. It catalyses the reaction hexan-2-one + hydrogen cyanide = (2S)-2-hydroxy-2-methylhexanenitrile. The catalysed reaction is heptan-2-one + hydrogen cyanide = (2S)-2-hydroxy-2-methylheptanenitrile. The enzyme catalyses 4-methylpentan-2-one + hydrogen cyanide = (2S)-2-hydroxy-2,4-dimethylpentanenitrile. It carries out the reaction 3,3-dimethylbutan-2-one + hydrogen cyanide = (2S)-2-hydroxy-2-methyl-3,3-dimethylbutanenitrile. It catalyses the reaction acetophenone + hydrogen cyanide = (2S)-2-hydroxy-2-phenylpropanenitrile. The catalysed reaction is propanal + hydrogen cyanide = (2S)-2-hydroxybutanenitrile. The enzyme catalyses pentanal + hydrogen cyanide = (2S)-2-hydroxyhexanenitrile. It carries out the reaction 2-methylpropanal + hydrogen cyanide = (2S)-2-hydroxy-3-methylbutanenitrile. It catalyses the reaction 2,2-dimethylpropanal + hydrogen cyanide = (2S)-2-hydroxy-3,3-dimethylbutanenitrile. The catalysed reaction is acrolein + hydrogen cyanide = (2S)-2-hydroxybut-3-enenitrile. The enzyme catalyses (2E)-but-2-enal + hydrogen cyanide = (2S,3E)-2-hydroxypent-3-enenitrile. It carries out the reaction (E)-hex-2-enal + hydrogen cyanide = (2S,3E)-2-hydroxyhept-3-enenitrile. It catalyses the reaction cyclohexanecarbaldehyde + hydrogen cyanide = (2S)-2-cyclohexyl-2-hydroxyacetonitrile. The catalysed reaction is benzaldehyde + hydrogen cyanide = (S)-mandelonitrile. The enzyme catalyses 4-methoxybenzaldehyde + hydrogen cyanide = (2S)-2-hydroxy-2-(4-methoxyphenyl)acetonitrile. It carries out the reaction piperonal + hydrogen cyanide = (2S)-2-(2H-1,3-benzodioxol-5-yl)-2-hydroxyacetonitrile. It catalyses the reaction formylthiophene + hydrogen cyanide = (2R)-2-hydroxy-2-(thiophen-2-yl)acetonitrile. The catalysed reaction is 3-formylthiophene + hydrogen cyanide = (2S)-2-hydroxy-2-(thiophen-3-yl)acetonitrile. The enzyme catalyses furan-3-carbaldehyde + hydrogen cyanide = (2S)-2-(furan-3-yl)-2-hydroxyacetonitrile. In terms of biological role, involved in cyanogenesis, the release of HCN from cyanogenic glycosides in injured tissues; the release of toxic HCN is believed to play a central role in the defense mechanism of plants against herbivores and microbial attack. Decomposes a variety of cyanohydrins (alpha-hydroxynitriles) into HCN and the corresponding aldehydes or ketones; two natural substrates are 2-hydroxy-2-methylpropanenitrile (acetone cyanohydrin) and 2-hydroxy-2-methylbutanenitrile (2-butanone cyanohydrin), but in vitro can also act on 2-hydroxy-2-methylpentanenitrile (2-pentanone cyanohydrin) and mandelonitrile. Is also able to catalyze the reverse reaction in vitro, leading to the stereospecific synthesis of aliphatic, aromatic, and heterocyclic cyanohydrins, important intermediates in the production of various agrochemicals or pharmaceuticals. In Manihot esculenta (Cassava), this protein is (S)-hydroxynitrile lyase.